The following is a 655-amino-acid chain: Fructose-1,6-bisphosphatase class 3 (655 aa).

This sequence belongs to the FBPase class 3 family. Requires Mn(2+) as cofactor.

The enzyme catalyses beta-D-fructose 1,6-bisphosphate + H2O = beta-D-fructose 6-phosphate + phosphate. Its pathway is carbohydrate biosynthesis; gluconeogenesis. The chain is Fructose-1,6-bisphosphatase class 3 from Porphyromonas gingivalis (strain ATCC 33277 / DSM 20709 / CIP 103683 / JCM 12257 / NCTC 11834 / 2561).